Consider the following 79-residue polypeptide: Exodeoxyribonuclease 7 small subunit (79 aa).

The protein belongs to the XseB family. In terms of assembly, heterooligomer composed of large and small subunits.

The protein localises to the cytoplasm. The catalysed reaction is Exonucleolytic cleavage in either 5'- to 3'- or 3'- to 5'-direction to yield nucleoside 5'-phosphates.. Functionally, bidirectionally degrades single-stranded DNA into large acid-insoluble oligonucleotides, which are then degraded further into small acid-soluble oligonucleotides. The sequence is that of Exodeoxyribonuclease 7 small subunit from Haemophilus influenzae (strain PittGG).